A 145-amino-acid chain; its full sequence is D-aminoacyl-tRNA deacylase (145 aa).

The Gly-cisPro motif, important for rejection of L-amino acids signature appears at 137–138; that stretch reads GP.

It belongs to the DTD family. As to quaternary structure, homodimer.

The protein resides in the cytoplasm. The catalysed reaction is glycyl-tRNA(Ala) + H2O = tRNA(Ala) + glycine + H(+). The enzyme catalyses a D-aminoacyl-tRNA + H2O = a tRNA + a D-alpha-amino acid + H(+). An aminoacyl-tRNA editing enzyme that deacylates mischarged D-aminoacyl-tRNAs. Also deacylates mischarged glycyl-tRNA(Ala), protecting cells against glycine mischarging by AlaRS. Acts via tRNA-based rather than protein-based catalysis; rejects L-amino acids rather than detecting D-amino acids in the active site. By recycling D-aminoacyl-tRNA to D-amino acids and free tRNA molecules, this enzyme counteracts the toxicity associated with the formation of D-aminoacyl-tRNA entities in vivo and helps enforce protein L-homochirality. The chain is D-aminoacyl-tRNA deacylase from Streptomyces avermitilis (strain ATCC 31267 / DSM 46492 / JCM 5070 / NBRC 14893 / NCIMB 12804 / NRRL 8165 / MA-4680).